Here is a 223-residue protein sequence, read N- to C-terminus: Lipoprotein-releasing system ATP-binding protein LolD (223 aa).

In terms of domain architecture, ABC transporter spans 1-223 (MAKVFRSGST…DEVEPQSLPA (223 aa)). Position 32–39 (32–39 (GDSGSGKS)) interacts with ATP.

It belongs to the ABC transporter superfamily. Lipoprotein translocase (TC 3.A.1.125) family. As to quaternary structure, the complex is composed of two ATP-binding proteins (LolD) and two transmembrane proteins (LolC and LolE).

It localises to the cell inner membrane. Part of the ABC transporter complex LolCDE involved in the translocation of mature outer membrane-directed lipoproteins, from the inner membrane to the periplasmic chaperone, LolA. Responsible for the formation of the LolA-lipoprotein complex in an ATP-dependent manner. In Koribacter versatilis (strain Ellin345), this protein is Lipoprotein-releasing system ATP-binding protein LolD.